We begin with the raw amino-acid sequence, 79 residues long: Small ribosomal subunit protein uS17 (79 aa).

It belongs to the universal ribosomal protein uS17 family. As to quaternary structure, part of the 30S ribosomal subunit.

In terms of biological role, one of the primary rRNA binding proteins, it binds specifically to the 5'-end of 16S ribosomal RNA. The sequence is that of Small ribosomal subunit protein uS17 from Orientia tsutsugamushi (strain Boryong) (Rickettsia tsutsugamushi).